A 499-amino-acid chain; its full sequence is UDP-N-acetylmuramoyl-L-alanyl-D-glutamate--2,6-diaminopimelate ligase (499 aa).

Ser32 is a UDP-N-acetyl-alpha-D-muramoyl-L-alanyl-D-glutamate binding site. 117–123 (GTNGKTT) provides a ligand contact to ATP. UDP-N-acetyl-alpha-D-muramoyl-L-alanyl-D-glutamate-binding positions include 159-160 (TT), Ser186, Gln192, and Arg194. An N6-carboxylysine modification is found at Lys226. Meso-2,6-diaminopimelate-binding positions include Arg394, 418-421 (DNPR), Gly469, and Glu473. Positions 418-421 (DNPR) match the Meso-diaminopimelate recognition motif motif.

This sequence belongs to the MurCDEF family. MurE subfamily. The cofactor is Mg(2+). Post-translationally, carboxylation is probably crucial for Mg(2+) binding and, consequently, for the gamma-phosphate positioning of ATP.

The protein resides in the cytoplasm. It carries out the reaction UDP-N-acetyl-alpha-D-muramoyl-L-alanyl-D-glutamate + meso-2,6-diaminopimelate + ATP = UDP-N-acetyl-alpha-D-muramoyl-L-alanyl-gamma-D-glutamyl-meso-2,6-diaminopimelate + ADP + phosphate + H(+). The protein operates within cell wall biogenesis; peptidoglycan biosynthesis. In terms of biological role, catalyzes the addition of meso-diaminopimelic acid to the nucleotide precursor UDP-N-acetylmuramoyl-L-alanyl-D-glutamate (UMAG) in the biosynthesis of bacterial cell-wall peptidoglycan. In Synechococcus sp. (strain WH7803), this protein is UDP-N-acetylmuramoyl-L-alanyl-D-glutamate--2,6-diaminopimelate ligase.